We begin with the raw amino-acid sequence, 484 residues long: tRNA sulfurtransferase (484 aa).

The 106-residue stretch at 61-166 (PHLIELLQCI…DKLLFIQARH (106 aa)) folds into the THUMP domain. Residues 183 to 184 (LI), Lys-265, Gly-287, and Gln-296 contribute to the ATP site. The cysteines at positions 344 and 456 are disulfide-linked. One can recognise a Rhodanese domain in the interval 404 to 483 (LGENDVILDI…FNNVQVFVKA (80 aa)). Cys-456 serves as the catalytic Cysteine persulfide intermediate.

Belongs to the ThiI family.

It localises to the cytoplasm. The enzyme catalyses [ThiI sulfur-carrier protein]-S-sulfanyl-L-cysteine + a uridine in tRNA + 2 reduced [2Fe-2S]-[ferredoxin] + ATP + H(+) = [ThiI sulfur-carrier protein]-L-cysteine + a 4-thiouridine in tRNA + 2 oxidized [2Fe-2S]-[ferredoxin] + AMP + diphosphate. It carries out the reaction [ThiS sulfur-carrier protein]-C-terminal Gly-Gly-AMP + S-sulfanyl-L-cysteinyl-[cysteine desulfurase] + AH2 = [ThiS sulfur-carrier protein]-C-terminal-Gly-aminoethanethioate + L-cysteinyl-[cysteine desulfurase] + A + AMP + 2 H(+). It participates in cofactor biosynthesis; thiamine diphosphate biosynthesis. In terms of biological role, catalyzes the ATP-dependent transfer of a sulfur to tRNA to produce 4-thiouridine in position 8 of tRNAs, which functions as a near-UV photosensor. Also catalyzes the transfer of sulfur to the sulfur carrier protein ThiS, forming ThiS-thiocarboxylate. This is a step in the synthesis of thiazole, in the thiamine biosynthesis pathway. The sulfur is donated as persulfide by IscS. This Actinobacillus succinogenes (strain ATCC 55618 / DSM 22257 / CCUG 43843 / 130Z) protein is tRNA sulfurtransferase.